A 238-amino-acid polypeptide reads, in one-letter code: TATA-box-binding protein (238 aa).

Residues 1 to 58 (MDLKLPPTNPTNPQQAKTFMKSIEEDEKNKAEDLDIIKKEDIDEPKQEDTTDGNGGGG) are disordered. Residues 27–49 (EKNKAEDLDIIKKEDIDEPKQED) are compositionally biased toward basic and acidic residues. 2 tandem repeats follow at residues 65-141 (LQNI…ARII) and 155-232 (IQNI…YPVL).

It belongs to the TBP family. As to quaternary structure, belongs to the TFIID complex together with the TBP-associated factors (TAFs). Binds DNA as monomer.

It localises to the nucleus. General transcription factor that functions at the core of the DNA-binding multiprotein factor TFIID. Binding of TFIID to the TATA box is the initial transcriptional step of the pre-initiation complex (PIC), playing a role in the activation of eukaryotic genes transcribed by RNA polymerase II. This is TATA-box-binding protein (TBP1) from Candida albicans (strain SC5314 / ATCC MYA-2876) (Yeast).